The primary structure comprises 981 residues: Isoleucine--tRNA ligase (981 aa).

The short motif at 50–60 (PTTNGMPHVGH) is the 'HIGH' region element. The short motif at 604–608 (KMSKS) is the 'KMSKS' region element. An ATP-binding site is contributed by K607.

This sequence belongs to the class-I aminoacyl-tRNA synthetase family. IleS type 2 subfamily. In terms of assembly, monomer. Zn(2+) is required as a cofactor.

The protein localises to the cytoplasm. The enzyme catalyses tRNA(Ile) + L-isoleucine + ATP = L-isoleucyl-tRNA(Ile) + AMP + diphosphate. In terms of biological role, catalyzes the attachment of isoleucine to tRNA(Ile). As IleRS can inadvertently accommodate and process structurally similar amino acids such as valine, to avoid such errors it has two additional distinct tRNA(Ile)-dependent editing activities. One activity is designated as 'pretransfer' editing and involves the hydrolysis of activated Val-AMP. The other activity is designated 'posttransfer' editing and involves deacylation of mischarged Val-tRNA(Ile). The polypeptide is Isoleucine--tRNA ligase (Pyrobaculum aerophilum (strain ATCC 51768 / DSM 7523 / JCM 9630 / CIP 104966 / NBRC 100827 / IM2)).